We begin with the raw amino-acid sequence, 257 residues long: Homeobox protein goosecoid (257 aa).

Residues 160 to 219 (KRRHRTIFTDEQLEALENLFQETKYPDVGTREQLARKVHLREEKVEVWFKNRRAKWRRQK) constitute a DNA-binding region (homeobox). The interval 213–257 (AKWRRQKRSSSEESENAEKWNKTSSSKASPEKREEEGKSDLDSDS) is disordered. Residues 241–257 (SPEKREEEGKSDLDSDS) show a composition bias toward basic and acidic residues.

The protein belongs to the paired homeobox family. Bicoid subfamily.

It localises to the nucleus. Regulates chordin (CHRD). May play a role in spatial programing within discrete embryonic fields or lineage compartments during organogenesis. In concert with NKX3-2, plays a role in defining the structural components of the middle ear; required for the development of the entire tympanic ring. Probably involved in the regulatory networks that define neural crest cell fate specification and determine mesoderm cell lineages in mammals. In Gorilla gorilla gorilla (Western lowland gorilla), this protein is Homeobox protein goosecoid (GSC).